A 377-amino-acid polypeptide reads, in one-letter code: Succinyl-diaminopimelate desuccinylase (377 aa).

H66 is a binding site for Zn(2+). D68 is an active-site residue. D99 is a binding site for Zn(2+). Residue E133 is the Proton acceptor of the active site. Residues E134, E162, and H348 each contribute to the Zn(2+) site.

The protein belongs to the peptidase M20A family. DapE subfamily. As to quaternary structure, homodimer. Zn(2+) is required as a cofactor. The cofactor is Co(2+).

It catalyses the reaction N-succinyl-(2S,6S)-2,6-diaminopimelate + H2O = (2S,6S)-2,6-diaminopimelate + succinate. The protein operates within amino-acid biosynthesis; L-lysine biosynthesis via DAP pathway; LL-2,6-diaminopimelate from (S)-tetrahydrodipicolinate (succinylase route): step 3/3. Functionally, catalyzes the hydrolysis of N-succinyl-L,L-diaminopimelic acid (SDAP), forming succinate and LL-2,6-diaminopimelate (DAP), an intermediate involved in the bacterial biosynthesis of lysine and meso-diaminopimelic acid, an essential component of bacterial cell walls. In Marinomonas sp. (strain MWYL1), this protein is Succinyl-diaminopimelate desuccinylase.